The sequence spans 425 residues: Kynureninase (425 aa).

Pyridoxal 5'-phosphate contacts are provided by residues L105, T106, 133-136 (FPSD), D218, H221, and Y243. K244 is subject to N6-(pyridoxal phosphate)lysine. Residues W274 and N302 each coordinate pyridoxal 5'-phosphate.

Belongs to the kynureninase family. As to quaternary structure, homodimer. Pyridoxal 5'-phosphate is required as a cofactor.

It catalyses the reaction L-kynurenine + H2O = anthranilate + L-alanine + H(+). The enzyme catalyses 3-hydroxy-L-kynurenine + H2O = 3-hydroxyanthranilate + L-alanine + H(+). It functions in the pathway amino-acid degradation; L-kynurenine degradation; L-alanine and anthranilate from L-kynurenine: step 1/1. Its pathway is cofactor biosynthesis; NAD(+) biosynthesis; quinolinate from L-kynurenine: step 2/3. Functionally, catalyzes the cleavage of L-kynurenine (L-Kyn) and L-3-hydroxykynurenine (L-3OHKyn) into anthranilic acid (AA) and 3-hydroxyanthranilic acid (3-OHAA), respectively. The chain is Kynureninase from Flavobacterium psychrophilum (strain ATCC 49511 / DSM 21280 / CIP 103535 / JIP02/86).